The sequence spans 300 residues: tRNA dimethylallyltransferase 2 (300 aa).

13–20 (GPTGVGKT) is an ATP binding site. 15–20 (TGVGKT) provides a ligand contact to substrate. The segment at 38-41 (DSRQ) is interaction with substrate tRNA.

Belongs to the IPP transferase family. As to quaternary structure, monomer. Mg(2+) is required as a cofactor.

It catalyses the reaction adenosine(37) in tRNA + dimethylallyl diphosphate = N(6)-dimethylallyladenosine(37) in tRNA + diphosphate. Functionally, catalyzes the transfer of a dimethylallyl group onto the adenine at position 37 in tRNAs that read codons beginning with uridine, leading to the formation of N6-(dimethylallyl)adenosine (i(6)A). In Porphyromonas gingivalis (strain ATCC 33277 / DSM 20709 / CIP 103683 / JCM 12257 / NCTC 11834 / 2561), this protein is tRNA dimethylallyltransferase 2.